The primary structure comprises 72 residues: Large ribosomal subunit protein bL31c (72 aa).

This sequence belongs to the bacterial ribosomal protein bL31 family. Type A subfamily. Part of the 50S ribosomal subunit.

It localises to the plastid. Its subcellular location is the chloroplast. Its function is as follows. Binds the 23S rRNA. This is Large ribosomal subunit protein bL31c (rpl31) from Phaeodactylum tricornutum (strain CCAP 1055/1).